Reading from the N-terminus, the 125-residue chain is Large ribosomal subunit protein bL12 (125 aa).

This sequence belongs to the bacterial ribosomal protein bL12 family. Homodimer. Part of the ribosomal stalk of the 50S ribosomal subunit. Forms a multimeric L10(L12)X complex, where L10 forms an elongated spine to which 2 to 4 L12 dimers bind in a sequential fashion. Binds GTP-bound translation factors.

Its function is as follows. Forms part of the ribosomal stalk which helps the ribosome interact with GTP-bound translation factors. Is thus essential for accurate translation. The protein is Large ribosomal subunit protein bL12 of Campylobacter jejuni subsp. jejuni serotype O:6 (strain 81116 / NCTC 11828).